The following is a 118-amino-acid chain: Fluoride-specific ion channel FluC 2 (118 aa).

A run of 4 helical transmembrane segments spans residues 1 to 21 (MIEA…RFAI), 33 to 53 (FPLA…YIIG), 55 to 75 (GVTT…FTTF), and 91 to 111 (ISTF…FAFL). Glycine 70 and threonine 73 together coordinate Na(+).

The protein belongs to the fluoride channel Fluc/FEX (TC 1.A.43) family.

It is found in the cell membrane. It catalyses the reaction fluoride(in) = fluoride(out). With respect to regulation, na(+) is not transported, but it plays an essential structural role and its presence is essential for fluoride channel function. Fluoride-specific ion channel. Important for reducing fluoride concentration in the cell, thus reducing its toxicity. This Bacillus cereus (strain ATCC 14579 / DSM 31 / CCUG 7414 / JCM 2152 / NBRC 15305 / NCIMB 9373 / NCTC 2599 / NRRL B-3711) protein is Fluoride-specific ion channel FluC 2.